Consider the following 278-residue polypeptide: MFGLKVKDAQKDDQKSSEYLSGEAGSQAGGSTQGTSTTTQRRGSSNENKVKVLQVAMKKKSDSEDNGQIELETNNLANAPIKRGSNNNQQVQLKADDFGTTSSSESGQSGTQGSTPSNPGPWTPWLTTEQIHNDPAKFAASILILYDAPYARNRTAIDRVDHLDPKVMTANYPPSWRTPKWNHHGLWDWKARDVLLQTTGFFNPRRHPEWFDGGQTVADNEKTGFDVDNSENTKQGFQKEADSDKSAPIALPFEAYFANIGNLTWFGQALLVFGICLS.

Residues 1–16 show a composition bias toward basic and acidic residues; the sequence is MFGLKVKDAQKDDQKS. Disordered stretches follow at residues 1–86 and 98–126; these read MFGL…RGSN and FGTT…TPWL. Low complexity-rich tracts occupy residues 33–45 and 99–117; these read QGTS…RGSS and GTTS…STPS.

The protein belongs to the adhesin P1 family.

This is an uncharacterized protein from Mycoplasma pneumoniae (strain ATCC 29342 / M129 / Subtype 1) (Mycoplasmoides pneumoniae).